The following is a 231-amino-acid chain: Thiamine import ATP-binding protein ThiQ (231 aa).

The ABC transporter domain occupies 2-230 (LHLDRLLIRQ…PPPALRAYLG (229 aa)). 32 to 39 (GPSGGGKS) serves as a coordination point for ATP.

This sequence belongs to the ABC transporter superfamily. Thiamine importer (TC 3.A.1.19.1) family. The complex is composed of two ATP-binding proteins (ThiQ), two transmembrane proteins (ThiP) and a solute-binding protein (ThiB).

The protein resides in the cell inner membrane. It catalyses the reaction thiamine(out) + ATP + H2O = thiamine(in) + ADP + phosphate + H(+). Part of the ABC transporter complex ThiBPQ involved in thiamine import. Responsible for energy coupling to the transport system. In Cereibacter sphaeroides (strain ATCC 17023 / DSM 158 / JCM 6121 / CCUG 31486 / LMG 2827 / NBRC 12203 / NCIMB 8253 / ATH 2.4.1.) (Rhodobacter sphaeroides), this protein is Thiamine import ATP-binding protein ThiQ.